A 221-amino-acid polypeptide reads, in one-letter code: Large ribosomal subunit protein uL16A (221 aa).

The protein belongs to the universal ribosomal protein uL16 family. Component of the large ribosomal subunit (LSU). Mature yeast ribosomes consist of a small (40S) and a large (60S) subunit. The 40S small subunit contains 1 molecule of ribosomal RNA (18S rRNA) and at least 33 different proteins. The large 60S subunit contains 3 rRNA molecules (25S, 5.8S and 5S rRNA) and at least 46 different proteins.

It is found in the cytoplasm. Component of the ribosome, a large ribonucleoprotein complex responsible for the synthesis of proteins in the cell. The small ribosomal subunit (SSU) binds messenger RNAs (mRNAs) and translates the encoded message by selecting cognate aminoacyl-transfer RNA (tRNA) molecules. The large subunit (LSU) contains the ribosomal catalytic site termed the peptidyl transferase center (PTC), which catalyzes the formation of peptide bonds, thereby polymerizing the amino acids delivered by tRNAs into a polypeptide chain. The nascent polypeptides leave the ribosome through a tunnel in the LSU and interact with protein factors that function in enzymatic processing, targeting, and the membrane insertion of nascent chains at the exit of the ribosomal tunnel. This chain is Large ribosomal subunit protein uL16A (rpl1001), found in Schizosaccharomyces pombe (strain 972 / ATCC 24843) (Fission yeast).